A 928-amino-acid chain; its full sequence is Protein naked cuticle (928 aa).

Residues isoleucine 68–glycine 80 are compositionally biased toward polar residues. A disordered region spans residues isoleucine 68 to asparagine 133. Basic residues predominate over residues glutamine 84–histidine 101. Over residues isoleucine 120–asparagine 133 the composition is skewed to polar residues. The tract at residues glutamate 177–serine 253 is interaction with dsh. Residues lysine 188–serine 224 form the EF-hand domain. The tract at residues lysine 227–arginine 372 is important for binding to zinc. 5 disordered regions span residues glycine 291–lysine 368, valine 462–glutamate 543, asparagine 578–asparagine 600, proline 614–proline 668, and leucine 779–isoleucine 825. Basic residues predominate over residues arginine 307–leucine 317. Residues serine 320, serine 327, and serine 329 each carry the phosphoserine modification. The segment covering glycine 353–lysine 368 has biased composition (basic residues). Residues glutamine 484–alanine 493 are compositionally biased toward polar residues. Positions histidine 525–glutamine 538 are enriched in low complexity. The segment at glutamate 543 to asparagine 572 is required for nuclear localization and inhibition of Wnt signaling. Low complexity-rich tracts occupy residues arginine 583–arginine 598 and serine 624–histidine 649. The span at histidine 650–histidine 663 shows a compositional bias: basic residues. Over residues glutamine 802–glutamine 811 the composition is skewed to basic and acidic residues. Polar residues predominate over residues arginine 812–glycine 822.

It belongs to the NKD family. In terms of assembly, interacts with dsh. This interaction may be stabilized by zinc.

It localises to the cell membrane. The protein resides in the cytoplasm. It is found in the nucleus. In terms of biological role, cell autonomous antagonist of the canonical Wnt signaling pathway. May activate a second Wnt signaling pathway that controls planar cell polarity. Required for neuroblast specification. This chain is Protein naked cuticle (nkd), found in Drosophila melanogaster (Fruit fly).